The sequence spans 926 residues: MASAVRGSRPWPRLGLQLQFAALLLGTLSPQVHTLRPENLLLVSTLDGSLHALSKQTGDLKWTLRDDPVIEGPMYVTEMAFLSDPADGSLYILGTQKQQGLMKLPFTIPELVHASPCRSSDGVFYTGRKQDAWFVVDPESGETQMTLTTEGPSTPRLYIGRTQYTVTMHDPRAPALRWNTTYRRYSAPPMDGSPGKYMSHLASCGMGLLLTVDPGSGTVLWTQDLGVPVMGVYTWHQDGLRQLPHLTLARDTLHFLALRWGHIRLPASGPRDTATLFSTLDTQLLMTLYVGKDETGFYVSKALVHTGVALVPRGLTLAPADGPTTDEVTLQVSGEREGSPSTAVRYPSGSVALPSQWLLIGHHELPPVLHTTMLRVHPTLGSGTAETRPPENTQAPAFFLELLSLSREKLWDSELHPEEKTPDSYLGLGPQDLLAASLTAVLLGGWILFVMRQQQPQVVEKQQETPLAPADFAHISQDAQSLHSGASRRSQKRLQSPSKQAQPLDDPEAEQLTVVGKISFNPKDVLGRGAGGTFVFRGQFEGRAVAVKRLLRECFGLVRREVQLLQESDRHPNVLRYFCTERGPQFHYIALELCRASLQEYVENPDLDRGGLEPEVVLQQLMSGLAHLHSLHIVHRDLKPGNILITGPDSQGLGRVVLSDFGLCKKLPAGRCSFSLHSGIPGTEGWMAPELLQLLPPDSPTSAVDIFSAGCVFYYVLSGGSHPFGDSLYRQANILTGAPCLAHLEEEVHDKVVARDLVGAMLSPLPQPRPSAPQVLAHPFFWSRAKQLQFFQDVSDWLEKESEQEPLVRALEAGGCAVVRDNWHEHISMPLQTDLRKFRSYKGTSVRDLLRAVRNKKHHYRELPVEVRQALGQVPDGFVQYFTNRFPRLLLHTHRAMRSCASESLFLPYYPPDSEARRPCPGATGR.

Positions 1 to 34 (MASAVRGSRPWPRLGLQLQFAALLLGTLSPQVHT) are cleaved as a signal peptide. Residues 35–430 (LRPENLLLVS…TPDSYLGLGP (396 aa)) lie on the Lumenal side of the membrane. The chain crosses the membrane as a helical span at residues 431–451 (QDLLAASLTAVLLGGWILFVM). Residues 452–926 (RQQQPQVVEK…RRPCPGATGR (475 aa)) lie on the Cytoplasmic side of the membrane. Residues 478-501 (DAQSLHSGASRRSQKRLQSPSKQA) are compositionally biased toward polar residues. The disordered stretch occupies residues 478 to 509 (DAQSLHSGASRRSQKRLQSPSKQAQPLDDPEA). In terms of domain architecture, Protein kinase spans 520–781 (FNPKDVLGRG…APQVLAHPFF (262 aa)). Residues 526–534 (LGRGAGGTF) and Lys548 contribute to the ATP site. Asp637 functions as the Proton acceptor in the catalytic mechanism. In terms of domain architecture, KEN spans 784-912 (RAKQLQFFQD…ESLFLPYYPP (129 aa)).

This sequence belongs to the protein kinase superfamily. Ser/Thr protein kinase family. It depends on Mg(2+) as a cofactor. In terms of processing, autophosphorylated.

It is found in the endoplasmic reticulum membrane. It carries out the reaction L-seryl-[protein] + ATP = O-phospho-L-seryl-[protein] + ADP + H(+). The catalysed reaction is L-threonyl-[protein] + ATP = O-phospho-L-threonyl-[protein] + ADP + H(+). With respect to regulation, the kinase domain is activated by trans-autophosphorylation. Kinase activity is required for activation of the endoribonuclease domain. Its function is as follows. Induces translational repression through 28S ribosomal RNA cleavage in response to ER stress. Pro-apoptotic. Appears to play no role in the unfolded-protein response, unlike closely related proteins. The polypeptide is Serine/threonine-protein kinase/endoribonuclease IRE2 (Homo sapiens (Human)).